The chain runs to 172 residues: UPF0114 protein PMI3225 (172 aa).

Transmembrane regions (helical) follow at residues 15–35 (LFAP…IKFF), 57–77 (LLSL…IFSG), 108–128 (KVAA…FMDL), and 136–156 (LLWY…MGYL).

The protein belongs to the UPF0114 family.

The protein localises to the cell membrane. This Proteus mirabilis (strain HI4320) protein is UPF0114 protein PMI3225.